The following is a 222-amino-acid chain: MLEGYYIVENTGVVPAERRFKFKDLKAWGYDLHLGTIDGREAYFVSKAGTREEGETYTEGGKEYHISETQKEIPKNARLLARIVIEKGQPYLEFWLDTEDGNFPLAKEDPRLILHRFWTEKKFNQLEKHVGSVGLTTDFFKDRVFVKSIPLPYEEYPPKVRRVLREVRDVHRDLTGFGRFVFQYFGEEDKTHQYRLWWLLPTIHLFDVEVSNEVDKILAMLD.

It belongs to the UPF0128 family.

The polypeptide is UPF0128 protein TK2294 (Thermococcus kodakarensis (strain ATCC BAA-918 / JCM 12380 / KOD1) (Pyrococcus kodakaraensis (strain KOD1))).